Reading from the N-terminus, the 412-residue chain is MAEVSSKELYKFKKTLKELSEKKGRGTELVSVYIPHDKQISDVGKQMRDELGQSANIKSKQTRKNVQSAIEVIMQRIRLFKAAPENGLVLFVGMIPRGGPGTEKMETYVFEPPEPITTYWYQCNNEFFLEPLEYMIEERETYGLAVIDRKEATIATLRGKKVNILNHLTSGVPGKHKAGGQSQRRFDRVIDLAAHEFKKRIGEHMNEDFLALEELEGVIIGGPGFTKEEFVKGDYLNYEIKDKIIATVDTSYTGEFGIREVIDKSADILNDLDVMQEKKVVQKFLHELVKDKGLASYGEREVRTNLIMGAVDTLLLSEDLTAMRKVFKCPSCGNEEEITVKSQSEADKLEKPCSNCGEILKEESSQTLIEDFVEKAEEMNSEVELISTETEEGMQLLRAFGGVAAILRYHVG.

Belongs to the eukaryotic release factor 1 family. Heterodimer of two subunits, one of which binds GTP.

It is found in the cytoplasm. Functionally, directs the termination of nascent peptide synthesis (translation) in response to the termination codons UAA, UAG and UGA. The protein is Peptide chain release factor subunit 1 of Methanobrevibacter smithii (strain ATCC 35061 / DSM 861 / OCM 144 / PS).